We begin with the raw amino-acid sequence, 521 residues long: Bifunctional dihydrofolate reductase-thymidylate synthase (521 aa).

One can recognise a DHFR domain in the interval 17–194; the sequence is NYQVVVAGTR…IRHSFVSFVR (178 aa). A substrate-binding site is contributed by Val21. Residues Ala23 and 29–35 each bind NADP(+); that span reads GIGKDGV. Substrate is bound at residue Asp43. NADP(+) contacts are provided by residues 67–69 and 88–91; these read RKT and LTRS. Residue Ile130 participates in substrate binding. Residue 131–138 coordinates NADP(+); the sequence is GGGQVLRE. Thr151 serves as a coordination point for substrate. Positions 197–521 are thymidylate synthase; the sequence is KSVAETHESN…HQKIEMKMAV (325 aa). Arg258 is a binding site for dUMP. Cys403 is an active-site residue. Residues His404, 422 to 426, Asn434, and 464 to 466 each bind dUMP; these read QRSAD and HVY.

It in the N-terminal section; belongs to the dihydrofolate reductase family. The protein in the C-terminal section; belongs to the thymidylate synthase family.

The catalysed reaction is (6S)-5,6,7,8-tetrahydrofolate + NADP(+) = 7,8-dihydrofolate + NADPH + H(+). It carries out the reaction dUMP + (6R)-5,10-methylene-5,6,7,8-tetrahydrofolate = 7,8-dihydrofolate + dTMP. The protein operates within cofactor biosynthesis; tetrahydrofolate biosynthesis; 5,6,7,8-tetrahydrofolate from 7,8-dihydrofolate: step 1/1. In terms of biological role, bifunctional enzyme. Involved in de novo dTMP biosynthesis. Key enzyme in folate metabolism. Can play two different roles depending on the source of dihydrofolate: de novo synthesis of tetrahydrofolate or recycling of the dihydrofolate released as one of the end products of the TS catalyzed reaction. Catalyzes an essential reaction for de novo glycine and purine synthesis, DNA precursor synthesis, and for the conversion of dUMP to dTMP. In Zea mays (Maize), this protein is Bifunctional dihydrofolate reductase-thymidylate synthase (DRTS).